The sequence spans 744 residues: Dual specificity protein kinase shkD (744 aa).

The segment at 1 to 276 (MKRFFSNLFK…SGPPEILPEE (276 aa)) is disordered. Composition is skewed to low complexity over residues 25–70 (PTTS…NSNQ), 79–107 (SPSTNQTQTPSNNTISTSPTVTTQPSFTP), and 127–200 (TSTT…QTAS). Residues 201–210 (VNHTSSDQSL) are compositionally biased toward polar residues. The span at 211–236 (NAQNVTQTNNNNNNNNNNNNNNNANN) shows a compositional bias: low complexity. The Protein kinase domain maps to 277–534 (IDRTDFLGQG…EILFRLNEIL (258 aa)). ATP-binding positions include 283 to 291 (LGQGSFGSV) and lysine 304. The Proton acceptor role is filled by aspartate 400. Positions 641–734 (WFHGDIVREQ…LVPCPKFTQE (94 aa)) constitute an SH2 domain.

Belongs to the protein kinase superfamily. Ser/Thr protein kinase family. SH2 domain-containing protein kinase subfamily.

The protein resides in the membrane. The enzyme catalyses L-seryl-[protein] + ATP = O-phospho-L-seryl-[protein] + ADP + H(+). It carries out the reaction L-threonyl-[protein] + ATP = O-phospho-L-threonyl-[protein] + ADP + H(+). Functionally, required for proper chemotaxis and phagocytosis; proper spatiotemporal control of F-actin levels in chemotaxing cells. Negative regulator of the PI3K (phosphatidylinositol 3 kinase) pathway. Predominantly phosphorylates serines and threonines and tyrosines at a lower level. The chain is Dual specificity protein kinase shkD (shkD) from Dictyostelium discoideum (Social amoeba).